Reading from the N-terminus, the 534-residue chain is Cytochrome c oxidase subunit 1 (534 aa).

The chain crosses the membrane as a helical span at residues 16–36 (VLYFIFAIFCGMAGTAMSLII). Ca(2+) contacts are provided by E39, A42, and G44. Transmembrane regions (helical) follow at residues 57-77 (VLVV…ALIG), 101-121 (ISFW…LVES), 147-167 (AIFA…NFIV), 182-202 (LPLF…SLPV), 235-255 (LFWF…FGII), and 267-287 (VFGE…GFLV). H62 contributes to the Fe(II)-heme a binding site. Position 241 (H241) interacts with Cu cation. Residues 241-245 (HPEVY) constitute a cross-link (1'-histidyl-3'-tyrosine (His-Tyr)). Residue Y245 participates in O2 binding. Cu cation is bound by residues H290 and H291. Helical transmembrane passes span 310-330 (MIIA…IYGG) and 338-358 (MLYA…GVAL). Mg(2+) is bound by residues H368 and D369. A run of 2 helical transmembrane segments spans residues 372–392 (YVVG…LFAG) and 412–432 (IQFW…HFLG). H376 contributes to the heme a3 binding site. H378 contributes to the Fe(II)-heme a binding site. Position 441 (P441) interacts with Ca(2+). A helical transmembrane segment spans residues 452–472 (YVASIGSIIAVFSLFLFIYIL).

It belongs to the heme-copper respiratory oxidase family. In terms of assembly, component of the cytochrome c oxidase (complex IV, CIV), a multisubunit enzyme composed of a catalytic core of 3 subunits and several supernumerary subunits. The complex exists as a monomer or a dimer and forms supercomplexes (SCs) in the inner mitochondrial membrane with ubiquinol-cytochrome c oxidoreductase (cytochrome b-c1 complex, complex III, CIII). The cofactor is heme. It depends on Cu cation as a cofactor.

The protein localises to the mitochondrion inner membrane. The enzyme catalyses 4 Fe(II)-[cytochrome c] + O2 + 8 H(+)(in) = 4 Fe(III)-[cytochrome c] + 2 H2O + 4 H(+)(out). It participates in energy metabolism; oxidative phosphorylation. Its function is as follows. Component of the cytochrome c oxidase, the last enzyme in the mitochondrial electron transport chain which drives oxidative phosphorylation. The respiratory chain contains 3 multisubunit complexes succinate dehydrogenase (complex II, CII), ubiquinol-cytochrome c oxidoreductase (cytochrome b-c1 complex, complex III, CIII) and cytochrome c oxidase (complex IV, CIV), that cooperate to transfer electrons derived from NADH and succinate to molecular oxygen, creating an electrochemical gradient over the inner membrane that drives transmembrane transport and the ATP synthase. Cytochrome c oxidase is the component of the respiratory chain that catalyzes the reduction of oxygen to water. Electrons originating from reduced cytochrome c in the intermembrane space (IMS) are transferred via the dinuclear copper A center (CU(A)) of subunit 2 and heme A of subunit 1 to the active site in subunit 1, a binuclear center (BNC) formed by heme A3 and copper B (CU(B)). The BNC reduces molecular oxygen to 2 water molecules using 4 electrons from cytochrome c in the IMS and 4 protons from the mitochondrial matrix. This Kluyveromyces lactis (strain ATCC 8585 / CBS 2359 / DSM 70799 / NBRC 1267 / NRRL Y-1140 / WM37) (Yeast) protein is Cytochrome c oxidase subunit 1 (COX1).